The chain runs to 156 residues: ATP synthase subunit b (156 aa).

Residues 12-32 (IAFAIFVLFCMKFIWPALMGA) traverse the membrane as a helical segment.

The protein belongs to the ATPase B chain family. In terms of assembly, F-type ATPases have 2 components, F(1) - the catalytic core - and F(0) - the membrane proton channel. F(1) has five subunits: alpha(3), beta(3), gamma(1), delta(1), epsilon(1). F(0) has three main subunits: a(1), b(2) and c(10-14). The alpha and beta chains form an alternating ring which encloses part of the gamma chain. F(1) is attached to F(0) by a central stalk formed by the gamma and epsilon chains, while a peripheral stalk is formed by the delta and b chains.

The protein localises to the cell inner membrane. In terms of biological role, f(1)F(0) ATP synthase produces ATP from ADP in the presence of a proton or sodium gradient. F-type ATPases consist of two structural domains, F(1) containing the extramembraneous catalytic core and F(0) containing the membrane proton channel, linked together by a central stalk and a peripheral stalk. During catalysis, ATP synthesis in the catalytic domain of F(1) is coupled via a rotary mechanism of the central stalk subunits to proton translocation. Component of the F(0) channel, it forms part of the peripheral stalk, linking F(1) to F(0). The chain is ATP synthase subunit b from Psychrobacter sp. (strain PRwf-1).